The sequence spans 336 residues: Probable tRNA pseudouridine synthase B (336 aa).

The active-site Nucleophile is Asp81. One can recognise a PUA domain in the interval 248–323; that stretch reads LKKVVVKDSA…VAVDVERVYM (76 aa).

Belongs to the pseudouridine synthase TruB family. Type 2 subfamily.

The enzyme catalyses uridine(55) in tRNA = pseudouridine(55) in tRNA. Functionally, could be responsible for synthesis of pseudouridine from uracil-55 in the psi GC loop of transfer RNAs. This chain is Probable tRNA pseudouridine synthase B, found in Methanocaldococcus jannaschii (strain ATCC 43067 / DSM 2661 / JAL-1 / JCM 10045 / NBRC 100440) (Methanococcus jannaschii).